Here is a 122-residue protein sequence, read N- to C-terminus: Large ribosomal subunit protein uL14 (122 aa).

Belongs to the universal ribosomal protein uL14 family. Part of the 50S ribosomal subunit. Forms a cluster with proteins L3 and L19. In the 70S ribosome, L14 and L19 interact and together make contacts with the 16S rRNA in bridges B5 and B8.

In terms of biological role, binds to 23S rRNA. Forms part of two intersubunit bridges in the 70S ribosome. The polypeptide is Large ribosomal subunit protein uL14 (Neisseria meningitidis serogroup C (strain 053442)).